The sequence spans 265 residues: MKALVLTLAVLFFTGSQAQHFWQQDDPQSSWDRVKDFATVYVDAIKDSGRDYVAQFEASALGKQLNLKLLDNWDSLTSTFAKVREQLGPVTQEFWDNLEKETESLRQEMNKDLEEVKQKVQPYLDEFKRKWQEELQIYRQKVAPLGEELREGARQKVQELQDKLTPLAEEMRDRARAHVETLRQQLAPYSDDLRQRMATRFEVLKEGGGSLAEYHAKASEQLKALGEKAKPALEDLRQGLLPVLESLKVSILAAIDEASKKLNAQ.

The N-terminal stretch at 1–18 (MKALVLTLAVLFFTGSQA) is a signal peptide. 2 consecutive repeat copies span residues 67–88 (LKLL…EQLG) and 89–110 (PVTQ…QEMN). A 10 X approximate tandem repeats region spans residues 67 to 265 (LKLLDNWDSL…DEASKKLNAQ (199 aa)). The residue at position 109 (methionine 109) is a Methionine sulfoxide. One copy of the 3; half-length repeat lies at 111–121 (KDLEEVKQKVQ). 5 consecutive repeat copies span residues 122–142 (PYLD…RQKV), 144–165 (PLGE…DKLT), 166–187 (PLAE…QQLA), 188–209 (PYSD…EGGG), and 210–230 (SLAE…EKAK). The 9; half-length repeat unit spans residues 231-241 (PALEDLRQGLL). Repeat 10 spans residues 242–265 (PVLESLKVSILAAIDEASKKLNAQ).

The protein belongs to the apolipoprotein A1/A4/E family. Homodimer. Interacts with APOA1BP and CLU. Component of a sperm activating protein complex (SPAP), consisting of APOA1, an immunoglobulin heavy chain, an immunoglobulin light chain and albumin. Interacts with NDRG1. Interacts with SCGB3A2. Interacts with NAXE and YJEFN3. Glycosylated. In terms of processing, palmitoylated. Post-translationally, phosphorylation sites are present in the extracellular medium. In terms of tissue distribution, major protein of plasma HDL, also found in chylomicrons.

Its subcellular location is the secreted. In terms of biological role, participates in the reverse transport of cholesterol from tissues to the liver for excretion by promoting cholesterol efflux from tissues and by acting as a cofactor for the lecithin cholesterol acyltransferase (LCAT). As part of the SPAP complex, activates spermatozoa motility. In Physeter macrocephalus (Sperm whale), this protein is Apolipoprotein A-I (APOA1).